We begin with the raw amino-acid sequence, 168 residues long: Phosphopantetheine adenylyltransferase (168 aa).

Substrate is bound at residue threonine 13. ATP contacts are provided by residues 13-14 (TF) and histidine 21. Residues lysine 45, leucine 78, and arginine 92 each contribute to the substrate site. Residues 93–95 (GLR), glutamate 103, and 128–134 (TQFISSS) each bind ATP.

Belongs to the bacterial CoaD family. Homohexamer. The cofactor is Mg(2+).

It localises to the cytoplasm. The catalysed reaction is (R)-4'-phosphopantetheine + ATP + H(+) = 3'-dephospho-CoA + diphosphate. The protein operates within cofactor biosynthesis; coenzyme A biosynthesis; CoA from (R)-pantothenate: step 4/5. Its function is as follows. Reversibly transfers an adenylyl group from ATP to 4'-phosphopantetheine, yielding dephospho-CoA (dPCoA) and pyrophosphate. This is Phosphopantetheine adenylyltransferase from Wolbachia pipientis wMel.